The chain runs to 515 residues: DNA-directed RNA polymerase subunit Rpo2N (515 aa).

Belongs to the RNA polymerase beta chain family. As to quaternary structure, part of the RNA polymerase complex.

It localises to the cytoplasm. The catalysed reaction is RNA(n) + a ribonucleoside 5'-triphosphate = RNA(n+1) + diphosphate. Functionally, DNA-dependent RNA polymerase (RNAP) catalyzes the transcription of DNA into RNA using the four ribonucleoside triphosphates as substrates. The Rpo2 subunit (Rpo2N and Rpo2C in this organism) is implicated in DNA promoter recognition and in nucleotide binding. This is DNA-directed RNA polymerase subunit Rpo2N from Methanothermobacter thermautotrophicus (strain Winter) (Methanobacterium thermoautotrophicum).